A 256-amino-acid chain; its full sequence is uncharacterized protein (256 aa).

This sequence to B.subtilis LplA.

This is an uncharacterized protein from Niallia circulans (Bacillus circulans).